The chain runs to 107 residues: uncharacterized protein (107 aa).

2 helical membrane-spanning segments follow: residues 14 to 34 (YLAEFLLGLTALFGLYLIVAW) and 68 to 88 (FFVFLGYVAHIIPFTAFLVPI).

Its subcellular location is the cell membrane. This is an uncharacterized protein from Haemophilus influenzae (strain ATCC 51907 / DSM 11121 / KW20 / Rd).